The chain runs to 201 residues: Recombination protein RecR (201 aa).

A C4-type zinc finger spans residues 59-74; that stretch reads CKICGNIDTENICRIC. The region spanning 82–177 is the Toprim domain; that stretch reads SIIAIVETVA…KISRLASGIP (96 aa).

Belongs to the RecR family.

Functionally, may play a role in DNA repair. It seems to be involved in an RecBC-independent recombinational process of DNA repair. It may act with RecF and RecO. This Rickettsia massiliae (strain Mtu5) protein is Recombination protein RecR.